Reading from the N-terminus, the 427-residue chain is Transcobalamin-2 (427 aa).

The N-terminal stretch at 1 to 18 (MRHLGAFLFLLGVLGALT) is a signal peptide. Cystine bridges form between Cys21–Cys267, Cys83–Cys96, Cys116–Cys309, and Cys165–Cys205. Residues Gln104, 152-156 (TSYYQ), His190, 190-194 (HHSVD), Asn242, Ser245, Gln291, and 395-397 (WQL) each bind cob(II)alamin.

It belongs to the eukaryotic cobalamin transport proteins family. As to quaternary structure, interacts with CD320 (via LDL-receptor class A domains).

It localises to the secreted. Functionally, primary vitamin B12-binding and transport protein. Delivers cobalamin to cells. The polypeptide is Transcobalamin-2 (TCN2) (Homo sapiens (Human)).